The primary structure comprises 281 residues: Apulose-4-phosphate transketolase subunit A (281 aa).

The protein belongs to the transketolase family. As to quaternary structure, probable heterodimer composed of AptA and AptB. Thiamine diphosphate is required as a cofactor.

It catalyses the reaction apulose 4-phosphate + D-glyceraldehyde 3-phosphate = D-xylulose 5-phosphate + dihydroxyacetone phosphate. The protein operates within carbohydrate metabolism. Functionally, involved in catabolism of D-apiose. Catalyzes the transfer of the glycolaldehyde group from apulose-4-phosphate to D-glyceraldehyde 3-phosphate, generating dihydroxyacetone phosphate and D-xylulose-5-phosphate. This Phocaeicola vulgatus (strain ATCC 8482 / DSM 1447 / JCM 5826 / CCUG 4940 / NBRC 14291 / NCTC 11154) (Bacteroides vulgatus) protein is Apulose-4-phosphate transketolase subunit A.